The chain runs to 741 residues: Copper-transporting ATPase (741 aa).

An HMA domain is found at 1–67 (MKESFYIEGM…LIEKLGYSPK (67 aa)). Over 1–83 (MKESFYIEGM…KKEFFSPNVK (83 aa)) the chain is Cytoplasmic. Residues cysteine 12 and cysteine 15 each contribute to the Cu cation site. A helical transmembrane segment spans residues 84–104 (LALAVIFTLFVVYLSMGAMLS). Over 105–124 (PSLLPESLLTINNHSNFLNA) the chain is Extracellular. The helical transmembrane segment at 125-144 (CLQLIGTLIVMHLGRDFYIQ) threads the bilayer. At 145 to 151 (GFKALWH) the chain is on the cytoplasmic side. The helical transmembrane segment at 152-172 (RQPNMSSLIAIGTSAALISSL) threads the bilayer. At 173 to 190 (WQLYFVYTSQWSYGHYYF) the chain is on the extracellular side. The chain crosses the membrane as a helical span at residues 191-211 (ESVCVILMFVMVGKRIENVSK). Over 212 to 339 (DKALDAMQAL…KAEISRLADK (128 aa)) the chain is Cytoplasmic. Residues 340–362 (VSSVFVPSVIAIAILAFVVWLII) form a helical membrane-spanning segment. Residues 363-375 (APKPDFWWNFGIA) are Extracellular-facing. A helical transmembrane segment spans residues 376 to 393 (LEVFVSVLVISCPCALGL). Over 394–681 (ATPMSILVAN…KLSQATIKNI (288 aa)) the chain is Cytoplasmic. Aspartate 431 serves as the catalytic 4-aspartylphosphate intermediate. Mg(2+) is bound by residues aspartate 627 and aspartate 631. Residues 682 to 701 (KENLFWAFCYNSVFIPLACG) traverse the membrane as a helical segment. Over 702-712 (VLYKANIMLSP) the chain is Extracellular. Residues 713–731 (AIAGLAMSLSSVSVVLNSQ) form a helical membrane-spanning segment. The Cytoplasmic segment spans residues 732–741 (RLRNFKIKDH).

The protein belongs to the cation transport ATPase (P-type) (TC 3.A.3) family. Type IB subfamily.

It localises to the cell membrane. It catalyses the reaction Cu(2+)(in) + ATP + H2O = Cu(2+)(out) + ADP + phosphate + H(+). Its function is as follows. Probably involved in copper export. The protein is Copper-transporting ATPase (copA) of Helicobacter pylori (Campylobacter pylori).